Consider the following 387-residue polypeptide: Ferrochelatase (387 aa).

Residues His-196 and Glu-277 each contribute to the Fe cation site.

It belongs to the ferrochelatase family.

Its subcellular location is the cytoplasm. The catalysed reaction is heme b + 2 H(+) = protoporphyrin IX + Fe(2+). Its pathway is porphyrin-containing compound metabolism; protoheme biosynthesis; protoheme from protoporphyrin-IX: step 1/1. Catalyzes the ferrous insertion into protoporphyrin IX. The sequence is that of Ferrochelatase from Gloeothece citriformis (strain PCC 7424) (Cyanothece sp. (strain PCC 7424)).